Here is a 559-residue protein sequence, read N- to C-terminus: Poly(U)-binding-splicing factor PUF60 (559 aa).

Positions 1–516 are inhibits homodimerization; sequence MATATIALQV…EDAEIIVKIF (516 aa). Residues Gln-14 and Lys-43 each participate in a glycyl lysine isopeptide (Lys-Gly) (interchain with G-Cter in SUMO2) cross-link. Thr-60 is modified (phosphothreonine). The tract at residues 77–559 is inhibits transcriptional repression, interaction with ERCC3 and apoptosis induction; the sequence is QSIKSVLVKQ…ERFDNSDLSA (483 aa). Lys-80 participates in a covalent cross-link: Glycyl lysine isopeptide (Lys-Gly) (interchain with G-Cter in SUMO2). At Ser-112 the chain carries Phosphoserine. RRM domains are found at residues 129 to 207 and 226 to 304; these read CRVY…RPSN and NRIY…KAVT. Ser-244 carries the post-translational modification Phosphoserine. The residue at position 251 (Lys-251) is an N6-acetyllysine. At Thr-314 the chain carries Phosphothreonine. The interval 416-437 is disordered; it reads KKEKEEEELFPESERPEMLSEQ. Lys-419 participates in a covalent cross-link: Glycyl lysine isopeptide (Lys-Gly) (interchain with G-Cter in SUMO2). Over residues 427–437 the composition is skewed to basic and acidic residues; that stretch reads ESERPEMLSEQ. N6-acetyllysine is present on Lys-454. Residue Lys-458 forms a Glycyl lysine isopeptide (Lys-Gly) (interchain with G-Cter in SUMO2) linkage. An RRM 3; atypical domain is found at 462–549; the sequence is TVMVLRNMVD…RKVVAEVYDQ (88 aa).

This sequence belongs to the RRM half pint family. As to quaternary structure, homodimer. Associates with the spliceosome. Found in a complex with RO60 and Y5 RNA. Found in a complex with FUBP1 and far upstream element (FUSE) DNA segment. Interacts directly with ERCC3. Interacts with CDK7 and GTF2H1. Interacts with SRSF11/P54. Does not interact with ERCC3 in xeroderma pigmentosum complementation group B (XPB) cells. Interacts with ARGLU1; interaction may be involved in ARGLU1-mediated modulation of alternative splicing. As to expression, isoform 2 is expressed in colonic epithelium and colorectal epithelium cancer (at protein level). Isoform 6 is expressed in colorectal epithelial cancer but below detection level in colonic epithelium. Expressed in heart, brain, placenta, lung, liver, skeletal muscle, kidney, pancreas, spleen, thymus, prostate, testis, ovary, small intestine, colon and peripheral blood leukocytes.

Its subcellular location is the nucleus. Its function is as follows. DNA- and RNA-binding protein, involved in several nuclear processes such as pre-mRNA splicing, apoptosis and transcription regulation. In association with FUBP1 regulates MYC transcription at the P2 promoter through the core-TFIIH basal transcription factor. Acts as a transcriptional repressor through the core-TFIIH basal transcription factor. Represses FUBP1-induced transcriptional activation but not basal transcription. Decreases ERCC3 helicase activity. Does not repress TFIIH-mediated transcription in xeroderma pigmentosum complementation group B (XPB) cells. Is also involved in pre-mRNA splicing. Promotes splicing of an intron with weak 3'-splice site and pyrimidine tract in a cooperative manner with U2AF2. Involved in apoptosis induction when overexpressed in HeLa cells. Isoform 6 failed to repress MYC transcription and inhibited FIR-induced apoptosis in colorectal cancer. Isoform 6 may contribute to tumor progression by enabling increased MYC expression and greater resistance to apoptosis in tumors than in normal cells. Modulates alternative splicing of several mRNAs. Binds to relaxed DNA of active promoter regions. Binds to the pyrimidine tract and 3'-splice site regions of pre-mRNA; binding is enhanced in presence of U2AF2. Binds to Y5 RNA in association with RO60. Binds to poly(U) RNA. The chain is Poly(U)-binding-splicing factor PUF60 from Homo sapiens (Human).